Here is a 49-residue protein sequence, read N- to C-terminus: Small ribosomal subunit protein eS31 (49 aa).

The Zn(2+) site is built by Cys-21, Cys-24, Cys-39, and Cys-42. The C4-type zinc-finger motif lies at 21-42 (CPRCGNGVFLAEHEDRMSCGRC).

The protein belongs to the eukaryotic ribosomal protein eS31 family. As to quaternary structure, part of the 30S ribosomal subunit. Zn(2+) serves as cofactor.

This is Small ribosomal subunit protein eS31 from Methanothrix thermoacetophila (strain DSM 6194 / JCM 14653 / NBRC 101360 / PT) (Methanosaeta thermophila).